A 413-amino-acid polypeptide reads, in one-letter code: DnaJ protein homolog xdj1 (413 aa).

The region spanning 6-73 is the J domain; sequence KLYDILEVHF…ESREMYDMYG (68 aa). The segment at 134-219 adopts a CR-type zinc-finger fold; the sequence is GKEVKLRATR…CKGSGTVPEQ (86 aa). 4 CXXCXGXG motif repeats span residues 147-154, 164-171, 191-198, and 207-214; these read CPRCQGRG, CLSCDGKG, CDTCNGKG, and CKHCKGSG. Cys-410 bears the Cysteine methyl ester mark. A lipid anchor (S-farnesyl cysteine) is attached at Cys-410. Residues 411 to 413 constitute a propeptide, removed in mature form; it reads QAQ.

It localises to the endoplasmic reticulum membrane. This chain is DnaJ protein homolog xdj1 (xdj1), found in Schizosaccharomyces pombe (strain 972 / ATCC 24843) (Fission yeast).